Consider the following 332-residue polypeptide: UPF0194 membrane protein YbhG (332 aa).

A signal peptide spans 1-16 (MMKKPVVIGLAVVVLA). Residues 108 to 209 (EEIAQAAAAV…LNLQDSTLIA (102 aa)) adopt a coiled-coil conformation.

It belongs to the UPF0194 family.

The protein localises to the periplasm. The protein is UPF0194 membrane protein YbhG of Shigella boydii serotype 4 (strain Sb227).